A 377-amino-acid chain; its full sequence is Queuine tRNA-ribosyltransferase (377 aa).

Aspartate 94 acts as the Proton acceptor in catalysis. Residues 94–98 (DSGGF), aspartate 148, glutamine 191, and glycine 218 each bind substrate. Residues 249–255 (GVGTPDD) are RNA binding. The active-site Nucleophile is aspartate 268. The segment at 273–277 (TRAGR) is RNA binding; important for wobble base 34 recognition.

Belongs to the queuine tRNA-ribosyltransferase family. Homodimer. Within each dimer, one monomer is responsible for RNA recognition and catalysis, while the other monomer binds to the replacement base PreQ1.

It carries out the reaction 7-aminomethyl-7-carbaguanine + guanosine(34) in tRNA = 7-aminomethyl-7-carbaguanosine(34) in tRNA + guanine. It participates in tRNA modification; tRNA-queuosine biosynthesis. Catalyzes the base-exchange of a guanine (G) residue with the queuine precursor 7-aminomethyl-7-deazaguanine (PreQ1) at position 34 (anticodon wobble position) in tRNAs with GU(N) anticodons (tRNA-Asp, -Asn, -His and -Tyr). Catalysis occurs through a double-displacement mechanism. The nucleophile active site attacks the C1' of nucleotide 34 to detach the guanine base from the RNA, forming a covalent enzyme-RNA intermediate. The proton acceptor active site deprotonates the incoming PreQ1, allowing a nucleophilic attack on the C1' of the ribose to form the product. After dissociation, two additional enzymatic reactions on the tRNA convert PreQ1 to queuine (Q), resulting in the hypermodified nucleoside queuosine (7-(((4,5-cis-dihydroxy-2-cyclopenten-1-yl)amino)methyl)-7-deazaguanosine). This is Queuine tRNA-ribosyltransferase from Brucella suis biovar 1 (strain 1330).